The sequence spans 204 residues: Large ribosomal subunit protein eL15 (204 aa).

It belongs to the eukaryotic ribosomal protein eL15 family. As to quaternary structure, component of the large ribosomal subunit.

The protein localises to the cytoplasm. Functionally, component of the large ribosomal subunit. The ribosome is a large ribonucleoprotein complex responsible for the synthesis of proteins in the cell. The polypeptide is Large ribosomal subunit protein eL15 (rpl15) (Anguilla japonica (Japanese eel)).